The chain runs to 177 residues: MRLSAAVIALLSTSAAAFSVYRENSVSANDELDVPGKSPLRFCDAAADRKDDIVTIEEVILTPNPPEAGQTLTIEASGIVKEAIEEGAYVNLQVKYGYIRLINTSADLCKEMKNVELECPIKKGRLSITKNVELPKEIPPGKYTVEADVYNSDDKHITCLTATVFFGRKTLGFLDDL.

The first 17 residues, 1–17 (MRLSAAVIALLSTSAAA), serve as a signal peptide directing secretion. Residues 18–30 (FSVYRENSVSAND) constitute a propeptide that is removed on maturation.

This sequence belongs to the NPC2 family. As to quaternary structure, monomer.

Catalyzes the intermembrane transfer of phosphatidylglycerol and phosphatidylinositol. This Neurospora crassa (strain ATCC 24698 / 74-OR23-1A / CBS 708.71 / DSM 1257 / FGSC 987) protein is Phosphatidylglycerol/phosphatidylinositol transfer protein (npc-2).